A 352-amino-acid polypeptide reads, in one-letter code: Biotin synthase (352 aa).

Residues 44-262 (NRVQVSTLLS…LAVARILMPK (219 aa)) enclose the Radical SAM core domain. Positions 59, 63, and 66 each coordinate [4Fe-4S] cluster. C103, C134, C194, and R266 together coordinate [2Fe-2S] cluster.

Belongs to the radical SAM superfamily. Biotin synthase family. In terms of assembly, homodimer. [4Fe-4S] cluster serves as cofactor. Requires [2Fe-2S] cluster as cofactor.

The enzyme catalyses (4R,5S)-dethiobiotin + (sulfur carrier)-SH + 2 reduced [2Fe-2S]-[ferredoxin] + 2 S-adenosyl-L-methionine = (sulfur carrier)-H + biotin + 2 5'-deoxyadenosine + 2 L-methionine + 2 oxidized [2Fe-2S]-[ferredoxin]. Its pathway is cofactor biosynthesis; biotin biosynthesis; biotin from 7,8-diaminononanoate: step 2/2. Its function is as follows. Catalyzes the conversion of dethiobiotin (DTB) to biotin by the insertion of a sulfur atom into dethiobiotin via a radical-based mechanism. The sequence is that of Biotin synthase from Pseudomonas putida (strain GB-1).